A 408-amino-acid chain; its full sequence is Succinylornithine transaminase (408 aa).

N6-(pyridoxal phosphate)lysine is present on Lys252.

It belongs to the class-III pyridoxal-phosphate-dependent aminotransferase family. AstC subfamily. It depends on pyridoxal 5'-phosphate as a cofactor.

It catalyses the reaction N(2)-succinyl-L-ornithine + 2-oxoglutarate = N-succinyl-L-glutamate 5-semialdehyde + L-glutamate. It functions in the pathway amino-acid degradation; L-arginine degradation via AST pathway; L-glutamate and succinate from L-arginine: step 3/5. Catalyzes the transamination of N(2)-succinylornithine and alpha-ketoglutarate into N(2)-succinylglutamate semialdehyde and glutamate. Can also act as an acetylornithine aminotransferase. The polypeptide is Succinylornithine transaminase (Salmonella typhimurium (strain LT2 / SGSC1412 / ATCC 700720)).